The following is a 159-amino-acid chain: U-actitoxin-Avd13a/b (159 aa).

An N-terminal signal peptide occupies residues 1–18 (MKSIFLVFFAVCLVKAEA). A propeptide spanning residues 19-26 (GKGRKREP) is cleaved from the precursor. 2 disulfide bridges follow: Cys-33–Cys-45 and Cys-36–Cys-52. Residues 59-60 (EP) constitute a propeptide that is removed on maturation. Intrachain disulfides connect Cys-67-Cys-79 and Cys-70-Cys-86. A propeptide spanning residues 93–94 (EP) is cleaved from the precursor. Disulfide bonds link Cys-101/Cys-113 and Cys-104/Cys-120. The propeptide occupies 127–128 (EP). Disulfide bonds link Cys-135/Cys-147 and Cys-138/Cys-154.

Belongs to the sea anemone BBH family.

The protein resides in the secreted. It localises to the nematocyst. Functionally, inhibits ion channels. In Anemonia viridis (Snakelocks anemone), this protein is U-actitoxin-Avd13a/b.